Consider the following 602-residue polypeptide: Probable HECT-type ubiquitin ligase-interacting protein creD (602 aa).

Disordered stretches follow at residues 375 to 398 (EVDP…GALS) and 457 to 499 (TADY…MATP). Positions 463–475 (PSSGSNSHSPASP) are enriched in low complexity. Residues 477 to 492 (LSRRPSDEGYRDHDHI) show a composition bias toward basic and acidic residues.

The protein belongs to the arrestin family. Interacts with hulA.

Functionally, component of the regulatory network controlling carbon source utilization through ubiquitination and deubiquitination involving creA, creB, creC, creD and acrB. May be involved in signaling by recognizing appropriately phosphorylated substrates via its arrestin domains and then recruit a HECT-type ubiquitin ligase such as hulA, leading to ubiquitination of the substrate, providing a link between ubiquitination and phosphorylation in protein regulation and stability. This is Probable HECT-type ubiquitin ligase-interacting protein creD (creD) from Aspergillus clavatus (strain ATCC 1007 / CBS 513.65 / DSM 816 / NCTC 3887 / NRRL 1 / QM 1276 / 107).